Here is a 288-residue protein sequence, read N- to C-terminus: MEIKLEQLGYCYQKNSPFEKRALLDVNVSFDSGSYSAIIGHTGSGKSTLLQHLNALLMPTEGKITVGDREIVAGVKQKKLRDLRKKVGIVFQFPEAQLFEETVEKDICFGPMNFGVSEEDAKLRAKKVIYEVGLTEEILSRSPFELSGGQMRRVAIAGVLAMDPEVLVLDEPTAGLDPHGREEIMEMFYNLHKEKGLTTVLVTHSMEDAARYAEKIVLMKAGTVLQIGTPREIFAKPDELVDLGLSVPDVVRFQGLFERKFDVKLTKTCLTIDELTTEMAPYLAKGGA.

The ABC transporter domain maps to 3-246 (IKLEQLGYCY…PDELVDLGLS (244 aa)). 40–47 (GHTGSGKS) serves as a coordination point for ATP.

The protein belongs to the ABC transporter superfamily. Energy-coupling factor EcfA family. As to quaternary structure, forms a stable energy-coupling factor (ECF) transporter complex composed of 2 membrane-embedded substrate-binding proteins (S component), 2 ATP-binding proteins (A component) and 2 transmembrane proteins (T component).

It localises to the cell membrane. Functionally, ATP-binding (A) component of a common energy-coupling factor (ECF) ABC-transporter complex. Unlike classic ABC transporters this ECF transporter provides the energy necessary to transport a number of different substrates. This Listeria monocytogenes serovar 1/2a (strain ATCC BAA-679 / EGD-e) protein is Energy-coupling factor transporter ATP-binding protein EcfA2.